Consider the following 312-residue polypeptide: Olfactory receptor 2J2 (312 aa).

Over 1–26 the chain is Extracellular; that stretch reads MMIKKNASSEDFFILLGFSNWPQLEV. The N-linked (GlcNAc...) asparagine glycan is linked to N6. A helical membrane pass occupies residues 27–50; the sequence is VLFVVILIFYLMTLTGNLFIIILS. The Cytoplasmic segment spans residues 51–58; sequence YVDSHLHT. The helical transmembrane segment at 59 to 80 threads the bilayer; that stretch reads PMYFFLSNLSFLDLCHTTSSIP. Over 81-101 the chain is Extracellular; that stretch reads QLLVNLRGPEKTISYAGCMVQ. Residues C98 and C190 are joined by a disulfide bond. The chain crosses the membrane as a helical span at residues 102–121; the sequence is LYFVLALGIAECVLLVVMSY. At 122 to 140 the chain is on the cytoplasmic side; that stretch reads DRYVAVCRPLHYTVLMHPR. The chain crosses the membrane as a helical span at residues 141–159; sequence FCHLLAAASWVIGFTISAL. Topologically, residues 160–196 are extracellular; sequence HSSFTFWVPLCGHRLVDHFFCEVPALLRLSCVDTHAN. Residues 197 to 220 traverse the membrane as a helical segment; sequence ELTLMVMSSIFVLIPLILILTAYG. Topologically, residues 221–237 are cytoplasmic; that stretch reads AIARAVLSMQSTTGLQK. The chain crosses the membrane as a helical span at residues 238–260; sequence VFRTCGAHLMVVSLFFIPVMCMY. The Extracellular segment spans residues 261 to 273; the sequence is LQPPSENSPDQGK. A helical membrane pass occupies residues 274 to 293; the sequence is FIALFYTVVTPSLNPLIYTL. Over 294–312 the chain is Cytoplasmic; sequence RNKHVKGAAKRLLGWEWGK.

The protein belongs to the G-protein coupled receptor 1 family.

It is found in the cell membrane. In terms of biological role, odorant receptor. This Homo sapiens (Human) protein is Olfactory receptor 2J2 (OR2J2).